The following is a 219-amino-acid chain: Probable octanoyltransferase (219 aa).

Residues 43–219 form the BPL/LPL catalytic domain; that stretch reads QPPKPTIITS…NNLDSFLMSK (177 aa). Residues 83–90, 151–153, and 164–166 each bind substrate; these read RGGQTTFH, AIG, and GLA. The Acyl-thioester intermediate role is filled by Cys-182.

The protein belongs to the LipB family.

The enzyme catalyses octanoyl-[ACP] + L-lysyl-[protein] = N(6)-octanoyl-L-lysyl-[protein] + holo-[ACP] + H(+). It participates in protein modification; protein lipoylation via endogenous pathway; protein N(6)-(lipoyl)lysine from octanoyl-[acyl-carrier-protein]: step 1/2. In terms of biological role, catalyzes the transfer of endogenously produced octanoic acid from octanoyl-acyl-carrier-protein onto the lipoyl domains of lipoate-dependent enzymes. Lipoyl-ACP can also act as a substrate although octanoyl-ACP is likely to be the physiological substrate. This Schizosaccharomyces pombe (strain 972 / ATCC 24843) (Fission yeast) protein is Probable octanoyltransferase.